The following is a 267-amino-acid chain: Dihydropteroate synthase (267 aa).

The Pterin-binding domain maps to 1 to 251; it reads MTKTKIMGIL…NVELNAKLAK (251 aa). Asn11 lines the Mg(2+) pocket. (7,8-dihydropterin-6-yl)methyl diphosphate is bound by residues Thr51, Asp84, Asn103, Asp167, Lys203, and 239 to 241; that span reads RVH.

This sequence belongs to the DHPS family. In terms of assembly, homodimer. Requires Mg(2+) as cofactor.

It catalyses the reaction (7,8-dihydropterin-6-yl)methyl diphosphate + 4-aminobenzoate = 7,8-dihydropteroate + diphosphate. It functions in the pathway cofactor biosynthesis; tetrahydrofolate biosynthesis; 7,8-dihydrofolate from 2-amino-4-hydroxy-6-hydroxymethyl-7,8-dihydropteridine diphosphate and 4-aminobenzoate: step 1/2. Functionally, catalyzes the condensation of para-aminobenzoate (pABA) with 6-hydroxymethyl-7,8-dihydropterin diphosphate (DHPt-PP) to form 7,8-dihydropteroate (H2Pte), the immediate precursor of folate derivatives. This is Dihydropteroate synthase (folP) from Staphylococcus aureus (strain MRSA252).